Here is a 254-residue protein sequence, read N- to C-terminus: MDYLFISSKTDPASQNIKKHVQNYGYDVFEIEKKSTQSNSSDFPISEMYIFLSKHASESKKPTLTVHTPGNLTEDNSRGGNSEEISPCNPIFNTLMLQNMNKYNEMEEYQELGFDVSFEVLHHGPTDLKAPSAFVEIGSSEEQWQIDDAAEIITNSLIDTLNSIQNSEYEKKEKIIGIGGGHYSPKFTKLALKEEYYIGYLTPKHAKLSENILNQMISKQDFDFVGIDWKGLYGEDKRKYVEFFDENDISWQRV.

Positions K61 to I85 are disordered. A compositionally biased stretch (polar residues) spans T65–E84.

This sequence belongs to the DtdA deacylase family. In terms of assembly, monomer. Zn(2+) is required as a cofactor.

The catalysed reaction is a D-aminoacyl-tRNA + H2O = a tRNA + a D-alpha-amino acid + H(+). It catalyses the reaction glycyl-tRNA(Ala) + H2O = tRNA(Ala) + glycine + H(+). In terms of biological role, D-aminoacyl-tRNA deacylase with broad substrate specificity. By recycling D-aminoacyl-tRNA to D-amino acids and free tRNA molecules, this enzyme counteracts the toxicity associated with the formation of D-aminoacyl-tRNA entities in vivo. This Methanococcus maripaludis (strain C5 / ATCC BAA-1333) protein is D-aminoacyl-tRNA deacylase.